Here is a 514-residue protein sequence, read N- to C-terminus: GMP synthase [glutamine-hydrolyzing] (514 aa).

The Glutamine amidotransferase type-1 domain maps to 7 to 197; it reads KVLILDFGSQ…LFNICKCERN (191 aa). The Nucleophile role is filled by C84. Active-site residues include H171 and E173. Positions 198–389 constitute a GMPS ATP-PPase domain; sequence WNMGSFIEYE…LKLPEDIVYR (192 aa). An ATP-binding site is contributed by 225–231; the sequence is SGGVDSS.

In terms of assembly, homodimer.

The enzyme catalyses XMP + L-glutamine + ATP + H2O = GMP + L-glutamate + AMP + diphosphate + 2 H(+). The protein operates within purine metabolism; GMP biosynthesis; GMP from XMP (L-Gln route): step 1/1. Catalyzes the synthesis of GMP from XMP. The chain is GMP synthase [glutamine-hydrolyzing] from Brachyspira hyodysenteriae (strain ATCC 49526 / WA1).